Here is a 159-residue protein sequence, read N- to C-terminus: Endoribonuclease YbeY (159 aa).

3 residues coordinate Zn(2+): histidine 125, histidine 129, and histidine 135.

It belongs to the endoribonuclease YbeY family. The cofactor is Zn(2+).

Its subcellular location is the cytoplasm. Single strand-specific metallo-endoribonuclease involved in late-stage 70S ribosome quality control and in maturation of the 3' terminus of the 16S rRNA. This chain is Endoribonuclease YbeY, found in Thermoanaerobacter pseudethanolicus (strain ATCC 33223 / 39E) (Clostridium thermohydrosulfuricum).